Consider the following 66-residue polypeptide: Large ribosomal subunit protein bL35 (66 aa).

Belongs to the bacterial ribosomal protein bL35 family.

The chain is Large ribosomal subunit protein bL35 from Brucella canis (strain ATCC 23365 / NCTC 10854 / RM-666).